The primary structure comprises 421 residues: D-inositol 3-phosphate glycosyltransferase (421 aa).

His9 serves as a coordination point for 1D-myo-inositol 3-phosphate. UDP-N-acetyl-alpha-D-glucosamine is bound by residues 15–16 and Gly23; that span reads QP. 1D-myo-inositol 3-phosphate is bound by residues 20–25, Lys78, Tyr110, Thr134, and Arg154; that span reads DAGGMN. 3 residues coordinate UDP-N-acetyl-alpha-D-glucosamine: Arg231, Lys236, and Arg294. Mg(2+) is bound by residues Tyr303, Gln304, and Ala306. UDP-N-acetyl-alpha-D-glucosamine-binding residues include Glu316 and Glu324. Residue Thr330 participates in Mg(2+) binding.

The protein belongs to the glycosyltransferase group 1 family. MshA subfamily. Homodimer.

The enzyme catalyses 1D-myo-inositol 3-phosphate + UDP-N-acetyl-alpha-D-glucosamine = 1D-myo-inositol 2-acetamido-2-deoxy-alpha-D-glucopyranoside 3-phosphate + UDP + H(+). Catalyzes the transfer of a N-acetyl-glucosamine moiety to 1D-myo-inositol 3-phosphate to produce 1D-myo-inositol 2-acetamido-2-deoxy-glucopyranoside 3-phosphate in the mycothiol biosynthesis pathway. In Corynebacterium aurimucosum (strain ATCC 700975 / DSM 44827 / CIP 107346 / CN-1) (Corynebacterium nigricans), this protein is D-inositol 3-phosphate glycosyltransferase.